We begin with the raw amino-acid sequence, 639 residues long: PTS-dependent dihydroxyacetone kinase operon regulatory protein (639 aa).

A sensor domain region spans residues 1 to 318; the sequence is MSGAFNNDGR…MRQLMTSQLG (318 aa). Residues 52–189 form the GAF domain; it reads AMLTLGQAAL…AIAREVGNLL (138 aa). The region spanning 203 to 265 is the PAS domain; that stretch reads NQLNALLESM…AVLQQAIKQA (63 aa). A Sigma-54 factor interaction domain is found at 327–552; that stretch reads MPQDDPQTRR…LYSVIENLAL (226 aa). Residues 355–362 and 415–424 contribute to the ATP site; these read GEEGVGKA and AHGGTLFLEK.

As to quaternary structure, homodimer. DhaR forms complexes with DhaK and DhaL-ADP.

Functionally, positively regulates the dhaKLM operon from a sigma-70 promoter. Represses its own expression. In Escherichia coli (strain K12), this protein is PTS-dependent dihydroxyacetone kinase operon regulatory protein.